Reading from the N-terminus, the 986-residue chain is Replication factor C subunit 1 (986 aa).

Positions 1–95 are disordered; that stretch reads MQRGIDSFFK…ALSKLKRHVD (95 aa). Ser-18, Ser-28, Ser-40, Ser-41, Ser-48, and Ser-58 each carry phosphoserine. Thr-60 carries the post-translational modification Phosphothreonine. Residues Ser-62 and Ser-63 each carry the phosphoserine modification. Position 71 is a phosphothreonine (Thr-71). 7 positions are modified to phosphoserine: Ser-128, Ser-137, Ser-149, Ser-154, Ser-156, Ser-164, and Ser-194. Basic and acidic residues predominate over residues 136-147; it reads ESIKEAAPEKKV. 2 disordered regions span residues 136–203 and 317–388; these read ESIK…ERHE and KQVK…NDVP. A Phosphothreonine modification is found at Thr-197. Residues 232–322 form the BRCT domain; sequence GSPDCLSGLT…SGIAKQVKEE (91 aa). Basic and acidic residues-rich tracts occupy residues 317-364 and 370-385; these read KQVK…EKHD and VKEE…DKLN. Position 487 to 494 (487 to 494) interacts with ATP; it reads GPPGIGKT. Positions 913 to 986 are disordered; sequence SEAAGADDDY…ASKSKAKAKK (74 aa). Residues 917–932 show a composition bias toward acidic residues; the sequence is GADDDYLDEGPGEEDG. Phosphoserine occurs at positions 938 and 939. The short motif at 955–959 is the Nuclear localization signal element; the sequence is KAKKR. The segment covering 962–979 has biased composition (low complexity); sequence TSKASGGSKKATSSTASK.

Belongs to the activator 1 large subunit family. Interacts with C-terminus of PCNA.

Its subcellular location is the nucleus. Its function is as follows. The elongation of primed DNA templates by DNA polymerase delta and epsilon requires the action of the accessory proteins proliferating cell nuclear antigen (PCNA) and activator 1. This subunit binds to the primer-template junction. This Drosophila melanogaster (Fruit fly) protein is Replication factor C subunit 1 (Gnf1).